An 88-amino-acid chain; its full sequence is Small ribosomal subunit protein uS15 (88 aa).

The protein belongs to the universal ribosomal protein uS15 family. As to quaternary structure, part of the 30S ribosomal subunit. Forms a bridge to the 50S subunit in the 70S ribosome, contacting the 23S rRNA.

Functionally, one of the primary rRNA binding proteins, it binds directly to 16S rRNA where it helps nucleate assembly of the platform of the 30S subunit by binding and bridging several RNA helices of the 16S rRNA. Its function is as follows. Forms an intersubunit bridge (bridge B4) with the 23S rRNA of the 50S subunit in the ribosome. The protein is Small ribosomal subunit protein uS15 of Borrelia hermsii (strain HS1 / DAH).